Consider the following 217-residue polypeptide: Zinc finger CCHC-type and RNA-binding motif-containing protein 1 (217 aa).

The region spanning 10–88 (STVYVSNLPF…RVIKASIAID (79 aa)) is the RRM domain. Residues 105–122 (SKCYECGESGHLSYACPK) form a CCHC-type zinc finger. The tract at residues 120-217 (CPKNMLGERE…YFSDEEELSD (98 aa)) is disordered. The segment covering 145–163 (PEEEIEEVEVSEEEGEDPA) has biased composition (acidic residues). Residues Ser155, Ser210, and Ser216 each carry the phosphoserine modification.

Component of the U11/U12 snRNPs that are part of the U12-type spliceosome. Interacts with ZRSR1.

The protein resides in the nucleus. It localises to the nucleoplasm. The chain is Zinc finger CCHC-type and RNA-binding motif-containing protein 1 (Zcrb1) from Rattus norvegicus (Rat).